We begin with the raw amino-acid sequence, 348 residues long: 2-methyl-6-phytyl-1,4-hydroquinone methyltransferase 2, chloroplastic (348 aa).

The interval M1 to G48 is disordered. A chloroplast-targeting transit peptide spans M1–R59. The Chloroplast intermembrane portion of the chain corresponds to C60–R317. Positions V125–F134 are SAM motif I. The segment at V170 to P183 is SAM motif II. The interval R211 to P224 is SAM motif III. The chain crosses the membrane as a helical span at residues F318–K338. Topologically, residues D339 to I348 are stromal.

It belongs to the class I-like SAM-binding methyltransferase superfamily. MPBQ/MBSQ MT family.

Its subcellular location is the plastid. The protein localises to the chloroplast inner membrane. The catalysed reaction is 2-methyl-6-phytyl-1,4-benzene-1,4-diol + S-adenosyl-L-methionine = 2,3-dimethyl-6-phytylbenzene-1,4-diol + S-adenosyl-L-homocysteine + H(+). It carries out the reaction 2-methyl-6-(all-trans-nonaprenyl)benzene-1,4-diol + S-adenosyl-L-methionine = plastoquinol-9 + S-adenosyl-L-homocysteine + H(+). The enzyme catalyses 6-geranylgeranyl-2-methylbenzene-1,4-diol + S-adenosyl-L-methionine = 6-geranylgeranyl-2,3-dimethylbenzene-1,4-diol + S-adenosyl-L-homocysteine + H(+). It participates in cofactor biosynthesis; tocopherol biosynthesis. In terms of biological role, involved in a key methylation step in both tocopherols (vitamin E) and plastoquinone synthesis. Catalyzes the conversion of 2-methyl-6-phytyl-1,4-hydroquinone (MPBQ) to 2,3-dimethyl-6-phytyl-1,4-hydroquinone (DMPQ, a substrate for tocopherol cyclase), and 2-methyl-6-solanyl-1,4-benzoquinone (MSBQ) to plastoquinone. This Oryza sativa subsp. japonica (Rice) protein is 2-methyl-6-phytyl-1,4-hydroquinone methyltransferase 2, chloroplastic.